The following is a 408-amino-acid chain: Bifunctional enzyme IspD/IspF (408 aa).

A 2-C-methyl-D-erythritol 4-phosphate cytidylyltransferase region spans residues 1-247 (MNAPFEKDRR…GPAMTELPDI (247 aa)). A 2-C-methyl-D-erythritol 2,4-cyclodiphosphate synthase region spans residues 248–408 (RVGNGYDVHG…TVAYPGSLGN (161 aa)). Residues Asp254 and His256 each coordinate a divalent metal cation. Residues 254-256 (DVH) and 280-281 (HS) contribute to the 4-CDP-2-C-methyl-D-erythritol 2-phosphate site. Position 288 (His288) interacts with a divalent metal cation. Residues 302-304 (DIG), 378-381 (TTNE), Phe385, and Arg388 each bind 4-CDP-2-C-methyl-D-erythritol 2-phosphate.

The protein in the N-terminal section; belongs to the IspD/TarI cytidylyltransferase family. IspD subfamily. In the C-terminal section; belongs to the IspF family. Requires a divalent metal cation as cofactor.

The catalysed reaction is 2-C-methyl-D-erythritol 4-phosphate + CTP + H(+) = 4-CDP-2-C-methyl-D-erythritol + diphosphate. The enzyme catalyses 4-CDP-2-C-methyl-D-erythritol 2-phosphate = 2-C-methyl-D-erythritol 2,4-cyclic diphosphate + CMP. The protein operates within isoprenoid biosynthesis; isopentenyl diphosphate biosynthesis via DXP pathway; isopentenyl diphosphate from 1-deoxy-D-xylulose 5-phosphate: step 2/6. It participates in isoprenoid biosynthesis; isopentenyl diphosphate biosynthesis via DXP pathway; isopentenyl diphosphate from 1-deoxy-D-xylulose 5-phosphate: step 4/6. Functionally, bifunctional enzyme that catalyzes the formation of 4-diphosphocytidyl-2-C-methyl-D-erythritol from CTP and 2-C-methyl-D-erythritol 4-phosphate (MEP) (IspD), and catalyzes the conversion of 4-diphosphocytidyl-2-C-methyl-D-erythritol 2-phosphate (CDP-ME2P) to 2-C-methyl-D-erythritol 2,4-cyclodiphosphate (ME-CPP) with a corresponding release of cytidine 5-monophosphate (CMP) (IspF). In Chelativorans sp. (strain BNC1), this protein is Bifunctional enzyme IspD/IspF.